Consider the following 222-residue polypeptide: Eukaryotic translation initiation factor 3 subunit K (222 aa).

In terms of domain architecture, PCI spans 46–208 (YDLEANLAVL…KIKTKNITEK (163 aa)).

Belongs to the eIF-3 subunit K family. In terms of assembly, component of the eukaryotic translation initiation factor 3 (eIF-3) complex. The eIF-3 complex interacts with pix.

It is found in the cytoplasm. In terms of biological role, component of the eukaryotic translation initiation factor 3 (eIF-3) complex, which is involved in protein synthesis of a specialized repertoire of mRNAs and, together with other initiation factors, stimulates binding of mRNA and methionyl-tRNAi to the 40S ribosome. The eIF-3 complex specifically targets and initiates translation of a subset of mRNAs involved in cell proliferation. This Drosophila willistoni (Fruit fly) protein is Eukaryotic translation initiation factor 3 subunit K.